We begin with the raw amino-acid sequence, 61 residues long: Small ribosomal subunit protein uS14 (61 aa).

4 residues coordinate Zn(2+): Cys-24, Cys-27, Cys-40, and Cys-43.

This sequence belongs to the universal ribosomal protein uS14 family. Zinc-binding uS14 subfamily. In terms of assembly, part of the 30S ribosomal subunit. Contacts proteins S3 and S10. The cofactor is Zn(2+).

In terms of biological role, binds 16S rRNA, required for the assembly of 30S particles and may also be responsible for determining the conformation of the 16S rRNA at the A site. The protein is Small ribosomal subunit protein uS14 of Chloroflexus aurantiacus (strain ATCC 29364 / DSM 637 / Y-400-fl).